A 426-amino-acid polypeptide reads, in one-letter code: Alpha/beta hydrolase pydG (426 aa).

This sequence belongs to the AB hydrolase superfamily. Homodimer.

The protein operates within mycotoxin biosynthesis. Alpha/beta hydrolasee; part of the gene cluster that mediates the biosynthesis of pyrrocidines, fungal natural products containing a macrocyclic para-cyclophane connected to a decahydrofluorene ring system that show potent antibiotic activities toward Gram-negative bacteria. Within the pathway, pydG catalyzes the Knoevenagel condensation that affords the 3-pyrrolin-2-one ring, using as substrate the polyketide-tyrosyl acyl thioester product of pydA. The pathway begins with the PKS-NRPS pydA which, with the help of the trans-enoyl reductase pydC, synthesizes the polyketide-tyrosyl acyl thioester product which can be reductively off-loaded by the terminal reductase (R) domain in pydA. The alpha/beta hydrolase pydG is then required to catalyze the subsequent Knoevenagel condensation that affords the 3-pyrrolin-2-one ring, whereas the four proteins pydB, pydE, pydX and pydZ then function synergistically to form the cyclophane. PydB and the membrane-bound pydX and pydZ are lipid-binding proteins that can sequester and mold the pdyG product into the inverse S-shape. Binding of the medium chain reductase pydE to the complex would trigger the cascade oxidative cyclization. PydY is involved in the Diels-Alder cycloaddition that forms the decahydrofluorene core. Additional non-enzymatic hydroxylation yields pyrrocidine A2 which can be further reduced into pyrrocidine B by an endogenous reductase. In Acremonium sp, this protein is Alpha/beta hydrolase pydG.